We begin with the raw amino-acid sequence, 122 residues long: UPF0145 protein Bmul_3577/BMULJ_04940 (122 aa).

The protein belongs to the UPF0145 family.

The polypeptide is UPF0145 protein Bmul_3577/BMULJ_04940 (Burkholderia multivorans (strain ATCC 17616 / 249)).